We begin with the raw amino-acid sequence, 88 residues long: HssA/B-like protein 12 (88 aa).

It belongs to the hssA/B family.

This is HssA/B-like protein 12 (hssl12) from Dictyostelium discoideum (Social amoeba).